A 71-amino-acid chain; its full sequence is SPbeta prophage-derived uncharacterized protein YopF (71 aa).

The protein is SPbeta prophage-derived uncharacterized protein YopF (yopF) of Bacillus subtilis (strain 168).